The sequence spans 138 residues: Large-conductance mechanosensitive channel (138 aa).

3 consecutive transmembrane segments (helical) span residues 15–35 (VDLA…NSIV), 38–58 (IIMP…MFIQ), and 80–100 (GNFI…FLVV).

It belongs to the MscL family. In terms of assembly, homopentamer.

The protein localises to the cell inner membrane. Channel that opens in response to stretch forces in the membrane lipid bilayer. May participate in the regulation of osmotic pressure changes within the cell. The chain is Large-conductance mechanosensitive channel from Brucella ovis (strain ATCC 25840 / 63/290 / NCTC 10512).